The sequence spans 99 residues: Cyclin-dependent kinases regulatory subunit (99 aa).

This sequence belongs to the CKS family. Forms a homohexamer that can probably bind six kinase subunits.

Its function is as follows. Binds to the catalytic subunit of the cyclin dependent kinases (Cdc2) and is essential for their biological function. The sequence is that of Cyclin-dependent kinases regulatory subunit from Leishmania mexicana.